A 169-amino-acid polypeptide reads, in one-letter code: Peptide deformylase 1 (169 aa).

Cys-93 and His-135 together coordinate Fe cation. The active site involves Glu-136. Position 139 (His-139) interacts with Fe cation.

It belongs to the polypeptide deformylase family. Requires Fe(2+) as cofactor.

It carries out the reaction N-terminal N-formyl-L-methionyl-[peptide] + H2O = N-terminal L-methionyl-[peptide] + formate. Removes the formyl group from the N-terminal Met of newly synthesized proteins. Requires at least a dipeptide for an efficient rate of reaction. N-terminal L-methionine is a prerequisite for activity but the enzyme has broad specificity at other positions. The polypeptide is Peptide deformylase 1 (Corynebacterium glutamicum (strain ATCC 13032 / DSM 20300 / JCM 1318 / BCRC 11384 / CCUG 27702 / LMG 3730 / NBRC 12168 / NCIMB 10025 / NRRL B-2784 / 534)).